A 98-amino-acid polypeptide reads, in one-letter code: Small ribosomal subunit protein bTHXm (98 aa).

The transit peptide at Met-1–Pro-35 directs the protein to the mitochondrion. The segment at Asp-52–Lys-71 is disordered. Over residues Lys-53–Lys-62 the composition is skewed to basic residues.

It belongs to the bacterial ribosomal protein bTHX family. In terms of assembly, component of the mitochondrial ribosome small subunit.

Its subcellular location is the mitochondrion. The chain is Small ribosomal subunit protein bTHXm from Arabidopsis thaliana (Mouse-ear cress).